The chain runs to 567 residues: GNAYMRIYSTKTTRITANATVNAADTHVRRSANYKPSSWSFDHIQSLSSKYTGDDYVARANTLKDAVKTMIRKSGNSLRTLELVDELQRLGISYLFEEEISNLLETIYYNYYKFPENWNKINLNLKALGFRLLRQHGYHVPQEIFLNFKDKNQNLNSYLLNDVVEMLNLYEASYHSFEDESILDDARDITTKYLKESLEKIDGSIFSSVTHALEQPLHWRVPRVEAKWFIELYEKKNGMSPTLVELAKLDFDMVQAIHLEDLKHASRWWRDTSWDTKLTFARDLIVENFLWTIGFSYLPNFSRGRRTITKVAVMITTLDDVYDVFGTLGELEQFTDVINRWDIKAIEQLPDYMKICFLGLYKSINDITHETLANKGFLILPYLKKAWADLCKAYLVEAQWYHRGHIPTLNEYLDNACVSISGPVALMHVHFLTSVSSIEEIHQCIQRTENIVHYVSLIFRLADDLGTSLGEMERGDTLKSIQLHMHETGATEPEARSYIKLLINKTWKKLNKERATVNSESSQEFIDYATNLVRMAQFMYGEGDEDFGLDVIKSHVLSLLFTPIQGI.

The transit peptide at 1 to 24 (GNAYMRIYSTKTTRITANATVNAA) directs the protein to the chloroplast. Arg-282, Asp-319, Asp-323, Arg-460, and Asp-463 together coordinate (2E)-geranyl diphosphate. Mg(2+) contacts are provided by Asp-319 and Asp-323. The DDXXD motif signature appears at 319–323 (DDVYD). Asp-463, Thr-467, and Glu-471 together coordinate Mg(2+).

Belongs to the terpene synthase family. Tpsb subfamily. It depends on Mg(2+) as a cofactor. In terms of tissue distribution, highly expressed in leaves and lower levels in inflorescences. Not detected in stems, stem epidermis, stem stele or roots.

The protein localises to the plastid. The protein resides in the chloroplast. The enzyme catalyses (2E)-geranyl diphosphate + H2O = (R)-linalool + diphosphate. Its pathway is secondary metabolite biosynthesis; terpenoid biosynthesis. In terms of biological role, monoterpene synthase that catalyzes the formation of (3R)-linalool from geranyl diphosphate, but not from isopentenyl diphosphate, dimethylallyl diphosphate, chrysanthemyl diphosphate, farnesyl diphosphate, (+)-copalyl diphosphate or geranylgeranyl diphosphate. The sequence is that of R-linalool synthase QH1, chloroplastic (QH1) from Artemisia annua (Sweet wormwood).